The following is a 710-amino-acid chain: Serine/threonine-protein phosphatase PP-Z2 (710 aa).

The segment at 1 to 382 is disordered; that stretch reads MGNSGSKQHT…ADGDNGSRTN (382 aa). Glycine 2 carries N-myristoyl glycine lipidation. The span at 15 to 27 shows a compositional bias: basic and acidic residues; sequence KKDDHDGDRKKTL. A compositionally biased stretch (low complexity) spans 40 to 49; that stretch reads SLKSSRSLRS. 2 positions are modified to phosphoserine: serine 55 and serine 71. Polar residues-rich tracts occupy residues 62–77 and 95–104; these read NVQAQTQPLSRRSSTL and PNNHYLTSHP. 2 stretches are compositionally biased toward low complexity: residues 105–125 and 143–155; these read SSSRRLSSSSRRSSMGNNNNS and NSTSMHSTSSFNS. The span at 160–172 shows a compositional bias: acidic residues; that stretch reads LTDDDDDRGDDGG. Threonine 161 is modified (phosphothreonine). Phosphoserine occurs at positions 203 and 224. Residues 247 to 260 show a composition bias toward low complexity; the sequence is SNRSNSHASSRKSS. The span at 261–273 shows a compositional bias: polar residues; sequence FGSTGNTAYSTPL. The residue at position 271 (threonine 271) is a Phosphothreonine. Position 275 is a phosphoserine (serine 275). Over residues 291-302 the composition is skewed to polar residues; it reads DNVNGRGTSPIP. A Phosphoserine modification is found at serine 310. Aspartate 454, histidine 456, aspartate 482, and asparagine 514 together coordinate Mn(2+). Histidine 515 acts as the Proton donor in catalysis. Mn(2+) is bound by residues histidine 563 and histidine 638.

It belongs to the PPP phosphatase family. PP-Z subfamily. It depends on Mn(2+) as a cofactor.

The catalysed reaction is O-phospho-L-seryl-[protein] + H2O = L-seryl-[protein] + phosphate. It catalyses the reaction O-phospho-L-threonyl-[protein] + H2O = L-threonyl-[protein] + phosphate. Functionally, essential for the maintenance of cell size and integrity in response to osmotic stress. This chain is Serine/threonine-protein phosphatase PP-Z2 (PPZ2), found in Saccharomyces cerevisiae (strain ATCC 204508 / S288c) (Baker's yeast).